The chain runs to 432 residues: Meiotically up-regulated gene 134 protein (432 aa).

It belongs to the UPF0300 family.

Its subcellular location is the cytoplasm. It localises to the cell cortex. Its function is as follows. Has a role in meiosis. The polypeptide is Meiotically up-regulated gene 134 protein (mug134) (Schizosaccharomyces pombe (strain 972 / ATCC 24843) (Fission yeast)).